The sequence spans 284 residues: NAD kinase (284 aa).

Asp-70 serves as the catalytic Proton acceptor. Residues 70-71 (DG), 139-140 (NE), Lys-167, Asp-169, Leu-177, 180-185 (TAYNLS), and Gln-236 each bind NAD(+).

It belongs to the NAD kinase family. A divalent metal cation serves as cofactor.

It localises to the cytoplasm. The catalysed reaction is NAD(+) + ATP = ADP + NADP(+) + H(+). Its function is as follows. Involved in the regulation of the intracellular balance of NAD and NADP, and is a key enzyme in the biosynthesis of NADP. Catalyzes specifically the phosphorylation on 2'-hydroxyl of the adenosine moiety of NAD to yield NADP. This is NAD kinase from Helicobacter pylori (strain Shi470).